A 192-amino-acid chain; its full sequence is Peptidyl-tRNA hydrolase (192 aa).

Tyr-14 contributes to the tRNA binding site. His-19 acts as the Proton acceptor in catalysis. Positions 61, 63, and 107 each coordinate tRNA.

Belongs to the PTH family. Monomer.

It localises to the cytoplasm. It catalyses the reaction an N-acyl-L-alpha-aminoacyl-tRNA + H2O = an N-acyl-L-amino acid + a tRNA + H(+). Its function is as follows. Hydrolyzes ribosome-free peptidyl-tRNAs (with 1 or more amino acids incorporated), which drop off the ribosome during protein synthesis, or as a result of ribosome stalling. Catalyzes the release of premature peptidyl moieties from peptidyl-tRNA molecules trapped in stalled 50S ribosomal subunits, and thus maintains levels of free tRNAs and 50S ribosomes. This Wolinella succinogenes (strain ATCC 29543 / DSM 1740 / CCUG 13145 / JCM 31913 / LMG 7466 / NCTC 11488 / FDC 602W) (Vibrio succinogenes) protein is Peptidyl-tRNA hydrolase.